The sequence spans 266 residues: Zinc transporter ZupT (266 aa).

The next 8 helical transmembrane spans lie at 8 to 28, 36 to 56, 71 to 91, 123 to 143, 152 to 172, 185 to 205, 209 to 229, and 246 to 266; these read LLLTLLAGLSTGIGSAMALAV, LALSLGFSAGIMLYVSFMEII, AGAWVSTISFFGGMLFTWAID, GIFTAAAIAIHNFPEGMAVFF, GIVIASTIALHNIPEGMAVAV, FSLSFLSGLAEPLGALVGYTL, FLTPFVLGIVLASVSGIMVYI, and LAITGLIAGMAVMALSLLLLT. N134 and E137 together coordinate Fe(2+). Residues E137 and H162 each contribute to the Zn(2+) site. Positions 163, 166, and 195 each coordinate Fe(2+). Residue E166 participates in Zn(2+) binding.

It belongs to the ZIP transporter (TC 2.A.5) family. ZupT subfamily.

It localises to the cell inner membrane. It carries out the reaction Zn(2+)(in) = Zn(2+)(out). In terms of biological role, mediates zinc uptake. May also transport other divalent cations. The sequence is that of Zinc transporter ZupT from Chlorobium luteolum (strain DSM 273 / BCRC 81028 / 2530) (Pelodictyon luteolum).